Reading from the N-terminus, the 1147-residue chain is PDZ domain-containing protein 8 (1147 aa).

Residues 2 to 24 (GLLLLILASAVLGSFLTLLAQFL) traverse the membrane as a helical segment. One can recognise an SMP-LTD domain in the interval 87–293 (APPTLETCYF…LPSYKIRFKP (207 aa)). One can recognise a PDZ domain in the interval 365–448 (TVELIKGNLQ…RVLVYYQRPA (84 aa)). Residues Ser490, Ser515, and Ser532 each carry the phosphoserine modification. The interval 504-673 (ELKEETQPLS…DSSDDPQMWE (170 aa)) is disordered. The span at 510 to 524 (QPLSHSPKRTPTTLS) shows a compositional bias: polar residues. Polar residues predominate over residues 557 to 576 (KPSTLKTSETTEAAQVSKPQ). Residues 580 to 596 (FKPPVPPRPQGRVPLPP) show a composition bias toward pro residues. Residues 833–884 (KHSFQDTQFQNPTWCDYCKKKVWTKAASQCMFCAYVCHKKCQEKCLAETPLC) form a Phorbol-ester/DAG-type zinc finger. Residues 948 to 990 (RLSEPGTDLVEPSPKHTPNTSDNEGSDTEVCGSNSPSKRGNSA) are disordered. Phosphoserine occurs at positions 960 and 973. Residues 978–987 (CGSNSPSKRG) are compositionally biased toward polar residues. Residues 1021 to 1056 (PTEERIQKLEFMLDKLQNEIDQELEHNNSLVREEKE) are a coiled coil. The span at 1126–1137 (QLIDSQPFSNIS) shows a compositional bias: polar residues. A disordered region spans residues 1126–1147 (QLIDSQPFSNISDDLFGPSESV).

In terms of assembly, interacts with MSN.

It localises to the endoplasmic reticulum membrane. Molecular tethering protein that connects endoplasmic reticulum and mitochondria membranes. PDZD8-dependent endoplasmic reticulum-mitochondria membrane tethering is essential for endoplasmic reticulum-mitochondria Ca(2+) transfer. In neurons, involved in the regulation of dendritic Ca(2+) dynamics by regulating mitochondrial Ca(2+) uptake in neurons. This is PDZ domain-containing protein 8 from Mus musculus (Mouse).